The sequence spans 539 residues: uncharacterized protein (539 aa).

ABC transporter domains lie at 9–276 (LEVK…EFKK) and 288–536 (IKLE…QEMF). ATP contacts are provided by residues 41–48 (GKSGAGKS) and 325–332 (GTSGAGKT).

Belongs to the ABC transporter superfamily.

This is an uncharacterized protein from Methanocaldococcus jannaschii (strain ATCC 43067 / DSM 2661 / JAL-1 / JCM 10045 / NBRC 100440) (Methanococcus jannaschii).